The primary structure comprises 212 residues: Imidazole glycerol phosphate synthase subunit HisH (212 aa).

Positions 2-212 constitute a Glutamine amidotransferase type-1 domain; the sequence is LTAIIDYESG…MIGNFLTWTP (211 aa). Catalysis depends on cysteine 87, which acts as the Nucleophile. Active-site residues include histidine 192 and glutamate 194.

Heterodimer of HisH and HisF.

It localises to the cytoplasm. It carries out the reaction 5-[(5-phospho-1-deoxy-D-ribulos-1-ylimino)methylamino]-1-(5-phospho-beta-D-ribosyl)imidazole-4-carboxamide + L-glutamine = D-erythro-1-(imidazol-4-yl)glycerol 3-phosphate + 5-amino-1-(5-phospho-beta-D-ribosyl)imidazole-4-carboxamide + L-glutamate + H(+). The enzyme catalyses L-glutamine + H2O = L-glutamate + NH4(+). It functions in the pathway amino-acid biosynthesis; L-histidine biosynthesis; L-histidine from 5-phospho-alpha-D-ribose 1-diphosphate: step 5/9. Functionally, IGPS catalyzes the conversion of PRFAR and glutamine to IGP, AICAR and glutamate. The HisH subunit catalyzes the hydrolysis of glutamine to glutamate and ammonia as part of the synthesis of IGP and AICAR. The resulting ammonia molecule is channeled to the active site of HisF. This chain is Imidazole glycerol phosphate synthase subunit HisH, found in Ruegeria pomeroyi (strain ATCC 700808 / DSM 15171 / DSS-3) (Silicibacter pomeroyi).